Consider the following 87-residue polypeptide: MAKFNVLDHNLVPEHHIVPEEEEKNILKELNIEKEFLPKISPNDPAIKALEAVHGKIKEGTIIKIVRKSPTMGHSVYYRVVASEVFK.

It belongs to the archaeal Rpo5/eukaryotic RPB5 RNA polymerase subunit family. As to quaternary structure, part of the RNA polymerase complex.

The protein resides in the cytoplasm. It catalyses the reaction RNA(n) + a ribonucleoside 5'-triphosphate = RNA(n+1) + diphosphate. Functionally, DNA-dependent RNA polymerase (RNAP) catalyzes the transcription of DNA into RNA using the four ribonucleoside triphosphates as substrates. The polypeptide is DNA-directed RNA polymerase subunit Rpo5 (Thermoplasma acidophilum (strain ATCC 25905 / DSM 1728 / JCM 9062 / NBRC 15155 / AMRC-C165)).